The following is a 651-amino-acid chain: Acetyl-coenzyme A synthetase (651 aa).

CoA-binding positions include 190–193 (RGGR), T309, and N333. ATP-binding positions include 385–387 (GEP), 409–414 (DTWWQT), D498, and R513. CoA is bound at residue S521. R524 contacts ATP. Residues V535, H537, and V540 each contribute to the Mg(2+) site. R582 is a CoA binding site. K607 is modified (N6-acetyllysine).

Belongs to the ATP-dependent AMP-binding enzyme family. Requires Mg(2+) as cofactor. Post-translationally, acetylated. Deacetylation by the SIR2-homolog deacetylase activates the enzyme.

The enzyme catalyses acetate + ATP + CoA = acetyl-CoA + AMP + diphosphate. Functionally, catalyzes the conversion of acetate into acetyl-CoA (AcCoA), an essential intermediate at the junction of anabolic and catabolic pathways. AcsA undergoes a two-step reaction. In the first half reaction, AcsA combines acetate with ATP to form acetyl-adenylate (AcAMP) intermediate. In the second half reaction, it can then transfer the acetyl group from AcAMP to the sulfhydryl group of CoA, forming the product AcCoA. The protein is Acetyl-coenzyme A synthetase of Xanthobacter autotrophicus (strain ATCC BAA-1158 / Py2).